Consider the following 404-residue polypeptide: Multidrug resistance protein MdtG (404 aa).

11 helical membrane-spanning segments follow: residues 19–39 (LGCFLTGAAFSLVMPFLPLYV), 56–76 (LVFSITFLFSAIASPFWGGLA), 90–110 (LGMAIVMLLMGMAQNIWQFLI), 113–133 (ALLGLLGGFIPNANALIATQV), 144–164 (TLSTGGVSGALLGPLAGGLLA), 171–191 (PVFFITASVLFICFLLTFFFI), 222–242 (LFVTTLIIQVATGSIAPILTL), 254–274 (IAFISGMIASVPGVAALLSAP), 288–308 (ILIVALIISVLLLIPMSFVQT), 317–337 (FLLGAADGALLPAVQTLLVYN), and 376–396 (AVFCVTAGVVLFNAIYSWNSL).

Belongs to the major facilitator superfamily. DHA1 family. MdtG (TC 2.A.1.2.20) subfamily.

It localises to the cell inner membrane. The protein is Multidrug resistance protein MdtG of Salmonella typhimurium (strain LT2 / SGSC1412 / ATCC 700720).